We begin with the raw amino-acid sequence, 189 residues long: ATP synthase subunit delta (189 aa).

This sequence belongs to the ATPase delta chain family. As to quaternary structure, F-type ATPases have 2 components, F(1) - the catalytic core - and F(0) - the membrane proton channel. F(1) has five subunits: alpha(3), beta(3), gamma(1), delta(1), epsilon(1). F(0) has three main subunits: a(1), b(2) and c(10-14). The alpha and beta chains form an alternating ring which encloses part of the gamma chain. F(1) is attached to F(0) by a central stalk formed by the gamma and epsilon chains, while a peripheral stalk is formed by the delta and b chains.

It localises to the cell inner membrane. F(1)F(0) ATP synthase produces ATP from ADP in the presence of a proton or sodium gradient. F-type ATPases consist of two structural domains, F(1) containing the extramembraneous catalytic core and F(0) containing the membrane proton channel, linked together by a central stalk and a peripheral stalk. During catalysis, ATP synthesis in the catalytic domain of F(1) is coupled via a rotary mechanism of the central stalk subunits to proton translocation. Functionally, this protein is part of the stalk that links CF(0) to CF(1). It either transmits conformational changes from CF(0) to CF(1) or is implicated in proton conduction. This chain is ATP synthase subunit delta, found in Ehrlichia ruminantium (strain Gardel).